Consider the following 202-residue polypeptide: Pyrrolidone-carboxylate peptidase (202 aa).

Residues Glu-78, Cys-141, and His-165 contribute to the active site.

It belongs to the peptidase C15 family. In terms of assembly, homotetramer.

Its subcellular location is the cytoplasm. The enzyme catalyses Release of an N-terminal pyroglutamyl group from a polypeptide, the second amino acid generally not being Pro.. In terms of biological role, removes 5-oxoproline from various penultimate amino acid residues except L-proline. The sequence is that of Pyrrolidone-carboxylate peptidase from Thermosipho melanesiensis (strain DSM 12029 / CIP 104789 / BI429).